The sequence spans 160 residues: Putative antiporter subunit mnhE2 (160 aa).

The next 3 helical transmembrane spans lie at 22 to 42 (SFQF…IYIL), 61 to 81 (FLGV…NYIL), and 102 to 122 (WAIT…VIRI).

Belongs to the CPA3 antiporters (TC 2.A.63) subunit E family. May form a heterooligomeric complex that consists of seven subunits: mnhA2, mnhB2, mnhC2, mnhD2, mnhE2, mnhF2 and mnhG2.

The protein localises to the cell membrane. The polypeptide is Putative antiporter subunit mnhE2 (mnhE2) (Staphylococcus haemolyticus (strain JCSC1435)).